The primary structure comprises 151 residues: MKKAERQRLIKQLIMQQEIETQDELITRLEEIGVRATQATVSRDIREMSIVKTHGADGRVKYAIFSQAQGTSSEEKLRESVKDSVVRMERVQFIVILHTEMGNADVVSNFLDEVAYPEVAGTVAGADTIIVITRSEEDAEHFIERIENMIF.

This sequence belongs to the ArgR family.

It is found in the cytoplasm. It functions in the pathway amino-acid biosynthesis; L-arginine biosynthesis [regulation]. Regulates arginine biosynthesis genes. This Enterococcus faecalis (strain ATCC 700802 / V583) protein is Arginine repressor.